We begin with the raw amino-acid sequence, 114 residues long: MLEVIKAIEAEQVRSDLPEFNVGDTVKVHQKIKEGTRERVQVFEGTVLKRQNGGARETFTVRRVAYNVAVEKTFPVNSPLIEKIQVVRKGKVRRAKLYYLRDRVGKAAKVKERI.

This sequence belongs to the bacterial ribosomal protein bL19 family.

Its function is as follows. This protein is located at the 30S-50S ribosomal subunit interface and may play a role in the structure and function of the aminoacyl-tRNA binding site. The polypeptide is Large ribosomal subunit protein bL19 (Clostridium botulinum (strain ATCC 19397 / Type A)).